The chain runs to 297 residues: Large ribosomal subunit protein uL18 (297 aa).

This sequence belongs to the universal ribosomal protein uL18 family. In terms of assembly, component of the large ribosomal subunit (LSU).

Its subcellular location is the cytoplasm. It localises to the nucleus. Component of the ribosome, a large ribonucleoprotein complex responsible for the synthesis of proteins in the cell. The small ribosomal subunit (SSU) binds messenger RNAs (mRNAs) and translates the encoded message by selecting cognate aminoacyl-transfer RNA (tRNA) molecules. The large subunit (LSU) contains the ribosomal catalytic site termed the peptidyl transferase center (PTC), which catalyzes the formation of peptide bonds, thereby polymerizing the amino acids delivered by tRNAs into a polypeptide chain. The nascent polypeptides leave the ribosome through a tunnel in the LSU and interact with protein factors that function in enzymatic processing, targeting, and the membrane insertion of nascent chains at the exit of the ribosomal tunnel. This is Large ribosomal subunit protein uL18 (RpL5) from Lysiphlebus testaceipes (Greenbugs aphid parastoid).